The chain runs to 410 residues: MNDEDYSTIYDTIQNERTYEVPDQPEENESPHYDDVHEYLRPENDLYATQLNTHEYDFVSVYTIKGEETSLASVQSEDRGYLLPDEIYSELQEAHPGEPQEDRGISMEGLYSSTQDQQLCAAELQENGSVMKEDLPSPSSFTIQHSKAFSTTKYSCYSDAEGLEEKEGAHMNPEIYLFVKAGIDGESIGNCPFSQRLFMILWLKGVVFNVTTVDLKRKPADLHNLAPGTHPPFLTFNGDVKTDVNKIEEFLEETLTPEKYPKLAAKHRESNTAGIDIFSKFSAYIKNTKQQNNAALERGLTKALKKLDDYLNTPLPEEIDANTCGEDKGSRRKFLDGDELTLADCNLLPKLHVVKIVAKKYRNYDIPAEMTGLWRYLKNAYARDEFTNTCAADSEIELAYADVAKRLSRS.

Residues 191–194 (CPFS) carry the G-site motif. Residues 193 to 213 (FSQRLFMILWLKGVVFNVTTV) traverse the membrane as a helical segment. Residues 260-400 (YPKLAAKHRE…AADSEIELAY (141 aa)) enclose the GST C-terminal domain.

The protein belongs to the chloride channel CLIC family. Component of a multimeric complex consisting of several cytoskeletal proteins, including actin, ezrin, alpha-actinin, gelsolin, and IQGAP1. Interacts with AKAP9. Interacts with TPRN. TPRN, CLIC5 and PTPQR form concentric rings at the base of stereocilia and may form a complex. Interacts with EZR, MYO6 and RDX; the proteins may work together as a complex to stabilize linkages between the plasma membrane and subjacent actin cytoskeleton at the stereocilium base. In terms of tissue distribution, widely expressed in both fetal and adult human tissues. Isoform 1 is expressed in renal glomeruli endothelial cells and podocytes (at protein level).

The protein resides in the cytoplasm. It localises to the cytoskeleton. It is found in the cell cortex. Its subcellular location is the membrane. The protein localises to the apical cell membrane. The protein resides in the mitochondrion. It localises to the cell projection. It is found in the stereocilium. Its subcellular location is the golgi apparatus. The protein localises to the microtubule organizing center. The protein resides in the centrosome. It carries out the reaction chloride(in) = chloride(out). The enzyme catalyses Na(+)(in) = Na(+)(out). The catalysed reaction is K(+)(in) = K(+)(out). Inhibited by F-actin. In terms of biological role, in the soluble state, catalyzes glutaredoxin-like thiol disulfide exchange reactions with reduced glutathione as electron donor. Can insert into membranes and form non-selective ion channels almost equally permeable to Na(+), K(+) and Cl(-). Required for normal hearing. It is necessary for the formation of stereocilia in the inner ear and normal development of the organ of Corti. May play a role in the regulation of transepithelial ion absorption and secretion. Is required for the development and/or maintenance of the proper glomerular endothelial cell and podocyte architecture. Plays a role in formation of the lens suture in the eye, which is important for normal optical properties of the lens. The sequence is that of Chloride intracellular channel protein 5 from Homo sapiens (Human).